We begin with the raw amino-acid sequence, 430 residues long: Serine--tRNA ligase (430 aa).

231–233 (TSE) contributes to the L-serine binding site. 262–264 (RSE) lines the ATP pocket. E285 serves as a coordination point for L-serine. 349-352 (EISS) is a binding site for ATP. S385 is a binding site for L-serine.

The protein belongs to the class-II aminoacyl-tRNA synthetase family. Type-1 seryl-tRNA synthetase subfamily. In terms of assembly, homodimer. The tRNA molecule binds across the dimer.

The protein resides in the cytoplasm. The catalysed reaction is tRNA(Ser) + L-serine + ATP = L-seryl-tRNA(Ser) + AMP + diphosphate + H(+). It catalyses the reaction tRNA(Sec) + L-serine + ATP = L-seryl-tRNA(Sec) + AMP + diphosphate + H(+). Its pathway is aminoacyl-tRNA biosynthesis; selenocysteinyl-tRNA(Sec) biosynthesis; L-seryl-tRNA(Sec) from L-serine and tRNA(Sec): step 1/1. Functionally, catalyzes the attachment of serine to tRNA(Ser). Is also able to aminoacylate tRNA(Sec) with serine, to form the misacylated tRNA L-seryl-tRNA(Sec), which will be further converted into selenocysteinyl-tRNA(Sec). This Roseobacter denitrificans (strain ATCC 33942 / OCh 114) (Erythrobacter sp. (strain OCh 114)) protein is Serine--tRNA ligase.